A 517-amino-acid polypeptide reads, in one-letter code: MAKLLALSLSFCFLLLGGCFALREQPQQNECQLERLDALEPDNRIESEGGLIETWNPNNKQFRCAGVALSRATLQRNALRRPYYSNAPQEIFIQQGNGYFGMVFPGCPETFEEPQESEQGEGRRYRDRHQKVNRFREGDIIAVPTGIVFWMYNDQDTPVIAVSLTDIRSSNNQLDQMPRRFYLAGNHEQEFLQYQHQQGGKQEQENEGNNIFSGFKRDYLEDAFNVNRHIVDRLQGRNEDEEKGAIVKVKGGLSIISPPEKQARHQRGSRQEEDEDEEKQPRHQRGSRQEEEEDEDEERQPRHQRRRGEEEEEDKKERGGSQKGKSRRQGDNGLEETVCTAKLRLNIGPSSSPDIYNPEAGRIKTVTSLDLPVLRWLKLSAEHGSLHKNAMFVPHYNLNANSIIYALKGRARLQVVNCNGNTVFDGELEAGRALTVPQNYAVAAKSLSDRFSYVAFKTNDRAGIARLAGTSSVINNLPLDVVAATFNLQRNEARQLKSNNPFKFLVPARESENRASA.

The signal sequence occupies residues 1 to 21 (MAKLLALSLSFCFLLLGGCFA). Intrachain disulfides connect cysteine 31/cysteine 64 and cysteine 107/cysteine 339. Residues 36–232 (LDALEPDNRI…AFNVNRHIVD (197 aa)) enclose the Cupin type-1 1 domain. A disordered region spans residues 249–335 (VKGGLSIISP…SRRQGDNGLE (87 aa)). The 150-residue stretch at 345–494 (LNIGPSSSPD…TFNLQRNEAR (150 aa)) folds into the Cupin type-1 2 domain.

It belongs to the 11S seed storage protein (globulins) family. As to quaternary structure, hexamer; each subunit is composed of an acidic and a basic chain derived from a single precursor and linked by a disulfide bond.

Functionally, this protein found in the seeds of many leguminous and non-leguminous plants is the source of sulfur-containing amino acids in seed meals. The polypeptide is Legumin A (LEGA) (Pisum sativum (Garden pea)).